The sequence spans 474 residues: Ribulose bisphosphate carboxylase large chain (474 aa).

Substrate is bound by residues N117 and T167. The active-site Proton acceptor is the K169. A substrate-binding site is contributed by K171. The Mg(2+) site is built by K195, D197, and E198. K195 is subject to N6-carboxylysine. H288 serves as the catalytic Proton acceptor. Substrate is bound by residues R289, H321, and S373.

The protein belongs to the RuBisCO large chain family. Type I subfamily. As to quaternary structure, heterohexadecamer of 8 large chains and 8 small chains. Mg(2+) serves as cofactor.

It carries out the reaction 2 (2R)-3-phosphoglycerate + 2 H(+) = D-ribulose 1,5-bisphosphate + CO2 + H2O. The enzyme catalyses D-ribulose 1,5-bisphosphate + O2 = 2-phosphoglycolate + (2R)-3-phosphoglycerate + 2 H(+). In terms of biological role, ruBisCO catalyzes two reactions: the carboxylation of D-ribulose 1,5-bisphosphate, the primary event in carbon dioxide fixation, as well as the oxidative fragmentation of the pentose substrate. Both reactions occur simultaneously and in competition at the same active site. This chain is Ribulose bisphosphate carboxylase large chain, found in Hydrogenophilus thermoluteolus (Pseudomonas hydrogenothermophila).